The primary structure comprises 302 residues: Pyridoxal 5'-phosphate synthase subunit PdxS (302 aa).

Asp32 serves as a coordination point for D-ribose 5-phosphate. The active-site Schiff-base intermediate with D-ribose 5-phosphate is Lys89. D-ribose 5-phosphate is bound at residue Gly161. Residue Arg173 coordinates D-glyceraldehyde 3-phosphate. Residues Gly222 and 243–244 contribute to the D-ribose 5-phosphate site; that span reads GS. The disordered stretch occupies residues 275–302; the sequence is IAKNPGKGMKGQANADLDEEEQLQGRGV.

It belongs to the PdxS/SNZ family. In terms of assembly, in the presence of PdxT, forms a dodecamer of heterodimers.

It carries out the reaction aldehydo-D-ribose 5-phosphate + D-glyceraldehyde 3-phosphate + L-glutamine = pyridoxal 5'-phosphate + L-glutamate + phosphate + 3 H2O + H(+). It functions in the pathway cofactor biosynthesis; pyridoxal 5'-phosphate biosynthesis. Its function is as follows. Catalyzes the formation of pyridoxal 5'-phosphate from ribose 5-phosphate (RBP), glyceraldehyde 3-phosphate (G3P) and ammonia. The ammonia is provided by the PdxT subunit. Can also use ribulose 5-phosphate and dihydroxyacetone phosphate as substrates, resulting from enzyme-catalyzed isomerization of RBP and G3P, respectively. This is Pyridoxal 5'-phosphate synthase subunit PdxS from Haloarcula marismortui (strain ATCC 43049 / DSM 3752 / JCM 8966 / VKM B-1809) (Halobacterium marismortui).